Consider the following 476-residue polypeptide: MEGPPLSPAPADNVTLNVSCGRPATLFDWADHRLISLLALAFLNLMVVAGNLLVVMAVFVHSKLRTVTNLFIVSLACADLLVGMLVLPFSATLEVLDVWLYGDVWCSVWLAVDVWMCTSSILNLCAISLDRYLAVSQPISYPSLMSTRRAKQLIAAVWVLSFVICFPPLVGWNDRPGTLIGSRGSSACRLTCELTNERGYVIYSALGSFFLPSTVMLFFYGRIYRTAVSTTRAIAQGFRTTKEDEEGRLTLRIHRGRSVTQRAEQAAAGGARAHGQVRLTLSEPGARRQNKPSFVVHCREDSRAKNQYEIYTVVEGDSRPGRRVPQPQRPAKKLSSASQSSEDDSRPPRFISRVSRRNVRHQARRFRMETKAAKTVGIIVGLFILCWLPFFVCYLVRGFCADCVPPLLFSVFFWLGYCNSAVNPCVYALCSRDFRFAFSSILCKCVCRRGAMERRFRRTLLVGNRSQTEEDCEVAD.

The Extracellular segment spans residues 1-36; the sequence is MEGPPLSPAPADNVTLNVSCGRPATLFDWADHRLIS. 2 N-linked (GlcNAc...) asparagine glycosylation sites follow: Asn13 and Asn17. The chain crosses the membrane as a helical span at residues 37 to 60; that stretch reads LLALAFLNLMVVAGNLLVVMAVFV. The Cytoplasmic portion of the chain corresponds to 61-69; that stretch reads HSKLRTVTN. The helical transmembrane segment at 70-93 threads the bilayer; sequence LFIVSLACADLLVGMLVLPFSATL. Residues 94–103 lie on the Extracellular side of the membrane; it reads EVLDVWLYGD. The helical transmembrane segment at 104–127 threads the bilayer; the sequence is VWCSVWLAVDVWMCTSSILNLCAI. A disulfide bond links Cys106 and Cys192. The Cytoplasmic segment spans residues 128–152; it reads SLDRYLAVSQPISYPSLMSTRRAKQ. A helical transmembrane segment spans residues 153–172; the sequence is LIAAVWVLSFVICFPPLVGW. At 173-200 the chain is on the extracellular side; sequence NDRPGTLIGSRGSSACRLTCELTNERGY. The helical transmembrane segment at 201 to 221 threads the bilayer; sequence VIYSALGSFFLPSTVMLFFYG. Topologically, residues 222 to 375 are cytoplasmic; sequence RIYRTAVSTT…FRMETKAAKT (154 aa). Positions 266 to 278 are enriched in low complexity; sequence AAAGGARAHGQVR. Disordered stretches follow at residues 266–293 and 317–351; these read AAAGGARAHGQVRLTLSEPGARRQNKPS and DSRPGRRVPQPQRPAKKLSSASQSSEDDSRPPRFI. The helical transmembrane segment at 376-396 threads the bilayer; it reads VGIIVGLFILCWLPFFVCYLV. Residues 397–406 are Extracellular-facing; that stretch reads RGFCADCVPP. A helical membrane pass occupies residues 407 to 430; that stretch reads LLFSVFFWLGYCNSAVNPCVYALC. Over 431 to 476 the chain is Cytoplasmic; the sequence is SRDFRFAFSSILCKCVCRRGAMERRFRRTLLVGNRSQTEEDCEVAD.

This sequence belongs to the G-protein coupled receptor 1 family.

The protein localises to the cell membrane. Orphan G-protein coupled receptor. This chain is Probable G-protein coupled receptor No9, found in Amphibalanus amphitrite (Striped barnacle).